The following is a 570-amino-acid chain: Sulfite reductase [NADPH] hemoprotein beta-component (570 aa).

Cys-434, Cys-440, Cys-479, and Cys-483 together coordinate [4Fe-4S] cluster. Cys-483 is a siroheme binding site.

It belongs to the nitrite and sulfite reductase 4Fe-4S domain family. In terms of assembly, alpha(8)-beta(8). The alpha component is a flavoprotein, the beta component is a hemoprotein. Siroheme is required as a cofactor. The cofactor is [4Fe-4S] cluster.

It catalyses the reaction hydrogen sulfide + 3 NADP(+) + 3 H2O = sulfite + 3 NADPH + 4 H(+). Its pathway is sulfur metabolism; hydrogen sulfide biosynthesis; hydrogen sulfide from sulfite (NADPH route): step 1/1. In terms of biological role, component of the sulfite reductase complex that catalyzes the 6-electron reduction of sulfite to sulfide. This is one of several activities required for the biosynthesis of L-cysteine from sulfate. The polypeptide is Sulfite reductase [NADPH] hemoprotein beta-component (Salmonella enteritidis PT4 (strain P125109)).